Here is a 267-residue protein sequence, read N- to C-terminus: GTP cyclohydrolase FolE2 (267 aa).

Belongs to the GTP cyclohydrolase IV family.

The catalysed reaction is GTP + H2O = 7,8-dihydroneopterin 3'-triphosphate + formate + H(+). It participates in cofactor biosynthesis; 7,8-dihydroneopterin triphosphate biosynthesis; 7,8-dihydroneopterin triphosphate from GTP: step 1/1. In terms of biological role, converts GTP to 7,8-dihydroneopterin triphosphate. The chain is GTP cyclohydrolase FolE2 from Cupriavidus necator (strain ATCC 17699 / DSM 428 / KCTC 22496 / NCIMB 10442 / H16 / Stanier 337) (Ralstonia eutropha).